Reading from the N-terminus, the 285-residue chain is ATP synthase gamma chain (285 aa).

It belongs to the ATPase gamma chain family. As to quaternary structure, F-type ATPases have 2 components, CF(1) - the catalytic core - and CF(0) - the membrane proton channel. CF(1) has five subunits: alpha(3), beta(3), gamma(1), delta(1), epsilon(1). CF(0) has three main subunits: a, b and c.

Its subcellular location is the cell membrane. Produces ATP from ADP in the presence of a proton gradient across the membrane. The gamma chain is believed to be important in regulating ATPase activity and the flow of protons through the CF(0) complex. This Clostridium novyi (strain NT) protein is ATP synthase gamma chain.